A 310-amino-acid polypeptide reads, in one-letter code: Probable manganese-dependent inorganic pyrophosphatase (310 aa).

Mn(2+)-binding residues include histidine 9, aspartate 13, aspartate 15, aspartate 76, histidine 98, and aspartate 150.

It belongs to the PPase class C family. Mn(2+) is required as a cofactor.

It is found in the cytoplasm. It carries out the reaction diphosphate + H2O = 2 phosphate + H(+). The chain is Probable manganese-dependent inorganic pyrophosphatase from Streptococcus thermophilus (strain CNRZ 1066).